The primary structure comprises 119 residues: MGTKESTQRRAQRVRRQIRKVAGERPRLSVHRTSKNIYVQVIDDAKGHTIAAASTLEKDLKGSLKTGADTAAAAAIGKLIAERATKAGVKEVVFDRGPYIYHGRVKALAEAAREGGLSF.

The protein belongs to the universal ribosomal protein uL18 family. In terms of assembly, part of the 50S ribosomal subunit; part of the 5S rRNA/L5/L18/L25 subcomplex. Contacts the 5S and 23S rRNAs.

This is one of the proteins that bind and probably mediate the attachment of the 5S RNA into the large ribosomal subunit, where it forms part of the central protuberance. This Mesorhizobium japonicum (strain LMG 29417 / CECT 9101 / MAFF 303099) (Mesorhizobium loti (strain MAFF 303099)) protein is Large ribosomal subunit protein uL18.